The sequence spans 275 residues: Phosphonoacetaldehyde hydrolase (275 aa).

Residue Asp-15 is the Nucleophile of the active site. Mg(2+)-binding residues include Asp-15 and Ala-17. Residue Lys-56 is the Schiff-base intermediate with substrate of the active site. A Mg(2+)-binding site is contributed by Asp-189.

This sequence belongs to the HAD-like hydrolase superfamily. PhnX family. Homodimer. The cofactor is Mg(2+).

The catalysed reaction is phosphonoacetaldehyde + H2O = acetaldehyde + phosphate + H(+). In terms of biological role, involved in phosphonate degradation. The sequence is that of Phosphonoacetaldehyde hydrolase from Pseudomonas aeruginosa (strain UCBPP-PA14).